The chain runs to 403 residues: Protein LAZ1 homolog 2 (403 aa).

Transmembrane regions (helical) follow at residues 16–36, 50–70, 162–182, 191–211, 236–256, and 269–289; these read SLII…YSIL, WIVS…ISLS, MILK…GVYG, GYPY…FCLV, IVFA…YGIL, and FLIC…FPAE. The disordered stretch occupies residues 381–403; that stretch reads SDGKEETEVTEEVTVETSVPPKE.

This sequence belongs to the TMEM184 family.

It is found in the membrane. The sequence is that of Protein LAZ1 homolog 2 from Arabidopsis thaliana (Mouse-ear cress).